The primary structure comprises 381 residues: S-adenosylmethionine synthase (381 aa).

H15 provides a ligand contact to ATP. D17 contacts Mg(2+). A K(+)-binding site is contributed by E43. The L-methionine site is built by E56 and Q99. The flexible loop stretch occupies residues 99-109; sequence QSLDIAQGVDN. Residues 164–166, 230–231, D239, 245–246, and K266 contribute to the ATP site; these read DGK, RF, and RK. D239 provides a ligand contact to L-methionine. Residue K270 coordinates L-methionine.

Belongs to the AdoMet synthase family. In terms of assembly, homotetramer; dimer of dimers. Mg(2+) is required as a cofactor. It depends on K(+) as a cofactor.

It is found in the cytoplasm. The catalysed reaction is L-methionine + ATP + H2O = S-adenosyl-L-methionine + phosphate + diphosphate. Its pathway is amino-acid biosynthesis; S-adenosyl-L-methionine biosynthesis; S-adenosyl-L-methionine from L-methionine: step 1/1. Its function is as follows. Catalyzes the formation of S-adenosylmethionine (AdoMet) from methionine and ATP. The overall synthetic reaction is composed of two sequential steps, AdoMet formation and the subsequent tripolyphosphate hydrolysis which occurs prior to release of AdoMet from the enzyme. This Legionella jeonii protein is S-adenosylmethionine synthase.